The sequence spans 448 residues: Trigger factor (448 aa).

The PPIase FKBP-type domain occupies 172-257 (GDRVTVDFVG…MKKIEWPHLP (86 aa)).

Belongs to the FKBP-type PPIase family. Tig subfamily.

The protein resides in the cytoplasm. The enzyme catalyses [protein]-peptidylproline (omega=180) = [protein]-peptidylproline (omega=0). Functionally, involved in protein export. Acts as a chaperone by maintaining the newly synthesized protein in an open conformation. Functions as a peptidyl-prolyl cis-trans isomerase. The chain is Trigger factor from Burkholderia cenocepacia (strain ATCC BAA-245 / DSM 16553 / LMG 16656 / NCTC 13227 / J2315 / CF5610) (Burkholderia cepacia (strain J2315)).